A 267-amino-acid chain; its full sequence is Mannose-specific lectin 1 (267 aa).

The first 24 residues, 1 to 24 (MAKSLVLSSLLLALLLAAPLASLA), serve as a signal peptide directing secretion. 2 Bulb-type lectin domains span residues 26 to 136 (NNVL…APNR) and 150 to 260 (RNVL…SPAR). 2 disulfides stabilise this stretch: Cys54/Cys76 and Cys178/Cys203.

Heterotetramer of 2 domain 1 and 2 domain 2 chains arranged as a dimer of domain 1/domain 2 heterodimers.

In terms of biological role, mannose-specific lectin. Has weak agglutinating activity towards trypsin-treated erythrocytes from rabbit but not from human. This is Mannose-specific lectin 1 from Crocus vernus (Dutch crocus).